Here is a 142-residue protein sequence, read N- to C-terminus: Galactose-6-phosphate isomerase subunit LacA 2 (142 aa).

This sequence belongs to the LacAB/RpiB family. As to quaternary structure, heteromultimeric protein consisting of LacA and LacB.

The enzyme catalyses aldehydo-D-galactose 6-phosphate = keto-D-tagatose 6-phosphate. It participates in carbohydrate metabolism; D-galactose 6-phosphate degradation; D-tagatose 6-phosphate from D-galactose 6-phosphate: step 1/1. The chain is Galactose-6-phosphate isomerase subunit LacA 2 from Streptococcus pyogenes serotype M3 (strain ATCC BAA-595 / MGAS315).